Reading from the N-terminus, the 369-residue chain is tRNA(Met) cytidine acetate ligase (369 aa).

ATP contacts are provided by residues 7 to 20, G96, N152, and R175; that span reads VAEFNPFHNGHKYL.

This sequence belongs to the TmcAL family.

Its subcellular location is the cytoplasm. The catalysed reaction is cytidine(34) in elongator tRNA(Met) + acetate + ATP = N(4)-acetylcytidine(34) in elongator tRNA(Met) + AMP + diphosphate. Catalyzes the formation of N(4)-acetylcytidine (ac(4)C) at the wobble position of elongator tRNA(Met), using acetate and ATP as substrates. First activates an acetate ion to form acetyladenylate (Ac-AMP) and then transfers the acetyl group to tRNA to form ac(4)C34. This chain is tRNA(Met) cytidine acetate ligase, found in Streptococcus agalactiae serotype III (strain NEM316).